Here is a 491-residue protein sequence, read N- to C-terminus: Glutamate--tRNA ligase (491 aa).

A 'HIGH' region motif is present at residues 9–19 (PSPTGTPHVGL). The 'KMSKS' region motif lies at 253–257 (KLSKR). Lysine 256 contributes to the ATP binding site.

This sequence belongs to the class-I aminoacyl-tRNA synthetase family. Glutamate--tRNA ligase type 1 subfamily. As to quaternary structure, monomer.

It is found in the cytoplasm. It catalyses the reaction tRNA(Glu) + L-glutamate + ATP = L-glutamyl-tRNA(Glu) + AMP + diphosphate. Functionally, catalyzes the attachment of glutamate to tRNA(Glu) in a two-step reaction: glutamate is first activated by ATP to form Glu-AMP and then transferred to the acceptor end of tRNA(Glu). The polypeptide is Glutamate--tRNA ligase (Mycolicibacterium gilvum (strain PYR-GCK) (Mycobacterium gilvum (strain PYR-GCK))).